The sequence spans 196 residues: Retinol-binding protein 4 (196 aa).

The signal sequence occupies residues 1 to 21 (MAYTWRALLLLALAFLGSSMA). Disulfide bonds link cysteine 25/cysteine 181, cysteine 91/cysteine 195, and cysteine 141/cysteine 150. Glutamine 119 contacts substrate.

This sequence belongs to the calycin superfamily. Lipocalin family. Interacts with TTR. Interaction with TTR prevents its loss by filtration through the kidney glomeruli. Interacts with STRA6.

The protein localises to the secreted. Retinol-binding protein that mediates retinol transport in blood plasma. Delivers retinol from the liver stores to the peripheral tissues. Transfers the bound all-trans retinol to STRA6, that then facilitates retinol transport across the cell membrane. This chain is Retinol-binding protein 4 (RBP4), found in Gallus gallus (Chicken).